A 274-amino-acid chain; its full sequence is MQNITQSWFVQGMIKATTDAWLKGWDERNGGNLTLRLDDADIAPYHDNFHAQPRYIPLSQPMPLLANTPFIVTGSGKFFRNVQLDPAANLGVVKVDSDGAGYHILWGLTNEAVPTSELPAHFLSHCERIKATNGKDRVIMHCHATNLIALTYVLENDTAVFTRQLWEGSTECLVVFPDGVGILPWMVPGTDEIGQATAQEMQKHSLVLWPFHGVFGSGPTLDETFGLIDTAEKSAQVLVKVYSMGGMKQTISREELIALGQRFGVTPLASALAL.

The active site involves E117. Zn(2+)-binding residues include H141, H143, and H212.

The protein belongs to the aldolase class II family. RhaD subfamily. Homotetramer. Zn(2+) serves as cofactor.

The protein resides in the cytoplasm. It carries out the reaction L-rhamnulose 1-phosphate = (S)-lactaldehyde + dihydroxyacetone phosphate. Its pathway is carbohydrate degradation; L-rhamnose degradation; glycerone phosphate from L-rhamnose: step 3/3. In terms of biological role, catalyzes the reversible cleavage of L-rhamnulose-1-phosphate to dihydroxyacetone phosphate (DHAP) and L-lactaldehyde. This Escherichia coli (strain SMS-3-5 / SECEC) protein is Rhamnulose-1-phosphate aldolase.